A 579-amino-acid polypeptide reads, in one-letter code: Zinc finger protein 248 (579 aa).

In terms of domain architecture, KRAB spans 8-79 (VSFKDVCVDF…EKGFPSQCHP (72 aa)). The C2H2-type 1; degenerate zinc-finger motif lies at 240–264 (TVCKYNECGRTFIESLKLNISQRPH). Residue Lys-341 forms a Glycyl lysine isopeptide (Lys-Gly) (interchain with G-Cter in SUMO2) linkage. 7 consecutive C2H2-type zinc fingers follow at residues 380 to 402 (FECG…QRTH), 408 to 430 (YECT…QRTH), 436 to 458 (YECK…QRTH), 464 to 486 (YECN…QRTH), 492 to 514 (FICN…QRTH), 520 to 543 (YKCN…RTHT), and 548 to 570 (YECN…QRIH).

Belongs to the krueppel C2H2-type zinc-finger protein family.

It localises to the nucleus. Its function is as follows. May be involved in transcriptional regulation. This Homo sapiens (Human) protein is Zinc finger protein 248 (ZNF248).